A 470-amino-acid chain; its full sequence is Maltose fermentation regulatory protein YPR196W (470 aa).

Residues 8–34 (CDCCRVRRVKCDRNRPCDRCRQRNLRC) constitute a DNA-binding region (zn(2)-C6 fungal-type). Residues 41–49 (RKRGPKSIG) carry the Nuclear localization signal motif.

Belongs to the MAL13 family.

The protein resides in the nucleus. May regulate the transcription of maltase and maltose permease genes. The chain is Maltose fermentation regulatory protein YPR196W from Saccharomyces cerevisiae (strain ATCC 204508 / S288c) (Baker's yeast).